We begin with the raw amino-acid sequence, 125 residues long: Meiotically up-regulated gene 112 protein (125 aa).

It localises to the golgi apparatus. Has a role in meiosis. This chain is Meiotically up-regulated gene 112 protein (mug112), found in Schizosaccharomyces pombe (strain 972 / ATCC 24843) (Fission yeast).